A 184-amino-acid polypeptide reads, in one-letter code: Tumor necrosis factor receptor superfamily member 13C (184 aa).

Topologically, residues 1–78 (MRRGPRSLRG…EAALPLPGLL (78 aa)) are extracellular. The stretch at 18–35 (PCVPAECFDLLVRHCVAC) is one TNFR-Cys; truncated repeat. Disulfide bonds link C19–C32 and C24–C35. The tract at residues 26–31 (DLLVRH) is essential for TNFSF13B/TALL1/BAFF/BLyS binding. The tract at residues 43-62 (PKPAGASSPAPRTALQPQES) is disordered. Residues 79–99 (FGAPALLGLALVLALVLVGLV) traverse the membrane as a helical; Signal-anchor for type III membrane protein segment. The Cytoplasmic portion of the chain corresponds to 100–184 (SWRRRQRRLR…TTKTAGPEQQ (85 aa)). Residues 107 to 184 (RLRGASSAEA…TTKTAGPEQQ (78 aa)) form a disordered region. Basic and acidic residues predominate over residues 118–128 (DGDKDAPEPLD). Residues 168–184 (LGSTELVTTKTAGPEQQ) show a composition bias toward polar residues.

In terms of tissue distribution, highly expressed in spleen and lymph node, and in resting B-cells. Detected at lower levels in activated B-cells, resting CD4+ T-cells, in thymus and peripheral blood leukocytes.

The protein localises to the membrane. Functionally, B-cell receptor specific for TNFSF13B/TALL1/BAFF/BLyS. Promotes the survival of mature B-cells and the B-cell response. The sequence is that of Tumor necrosis factor receptor superfamily member 13C (TNFRSF13C) from Homo sapiens (Human).